A 410-amino-acid chain; its full sequence is MGSCSPQLPLICLSDQTLKPGSSKWVKVRSDVRKALEDYGCFEAKIDQVSMELQGSVLKAMQELFALPTEAKQRNVCPKPFAGYFSHNGLSESFGIKDANILEKAHEFTQQLWPEGNKSIKMIQLYAEKLAELDMMVRRLILESYGIEYFIDEHLNSTYYRMRLMKYIARPDNDITAAVGANVDNGANDNADGDANVNDDGASIGVKVNVDVGDDVNDNDSVNIGVGVDINVETNVNGHLDAEANGDATAWVVGAVSGNASVGAKEANVDAELGLPSHTDKSLSGIIYQHQIDGLEVKTKEGKWIRVKPAPNTVIFIAGDALCALMNGRIPSPYHRVRVTEKKKTRYAAALFSNPKEGYIIDSPKELVDEKHPRAFKPFDFVDLFNFYHTEAGRRAPSTLQAFCGVSAGK.

Positions 258–355 (GNASVGAKEA…RYAAALFSNP (98 aa)) constitute a Fe2OG dioxygenase domain. The Fe cation site is built by His-278, Asp-280, and His-335. Arg-346 contacts 2-oxoglutarate.

It belongs to the iron/ascorbate-dependent oxidoreductase family. Requires Fe(2+) as cofactor.

Functionally, 2-oxoglutarate-dependent dioxygenase involved in glucosinolates biosynthesis. Catalyzes the conversion of methylsulfinylalkyl glucosinolates to hydroxyalkyl glucosinolates. The chain is 2-oxoglutarate-dependent dioxygenase AOP3 (AOP3) from Arabidopsis thaliana (Mouse-ear cress).